Reading from the N-terminus, the 264-residue chain is PDZ domain-containing protein 9 (264 aa).

Residues 22–109 (VHNLSKTQQT…GTVLQIKVYR (88 aa)) form the PDZ domain.

This Macaca fascicularis (Crab-eating macaque) protein is PDZ domain-containing protein 9 (PDZD9).